A 273-amino-acid chain; its full sequence is HMP-PP phosphatase (273 aa).

D8 serves as the catalytic Nucleophile. Mg(2+) contacts are provided by D8, D10, and D212.

The protein belongs to the HAD-like hydrolase superfamily. Cof family. Requires Mg(2+) as cofactor.

It carries out the reaction 4-amino-2-methyl-5-(diphosphooxymethyl)pyrimidine + H2O = 4-amino-2-methyl-5-(phosphooxymethyl)pyrimidine + phosphate + H(+). Catalyzes the hydrolysis of 4-amino-2-methyl-5-hydroxymethylpyrimidine pyrophosphate (HMP-PP) to 4-amino-2-methyl-5-hydroxymethylpyrimidine phosphate (HMP-P). The protein is HMP-PP phosphatase of Yersinia pestis bv. Antiqua (strain Antiqua).